Consider the following 349-residue polypeptide: Divinyl chlorophyll a/b light-harvesting protein PcbA (349 aa).

The next 6 membrane-spanning stretches (helical) occupy residues 27–47 (FIAAHAAHTGLIAFWAGAFTL), 57–77 (VPMGHQPLIALPHLATLGIGF), 89–109 (VVAVAVCHLVGSMAYGAGGLM), 202–222 (VMGGHAFLAFLEITGGAFHIA), 242–262 (AILSWSLAGIGWMAVVAAFWS), and 304–324 (LANVHYYFGFFFIQGHLWHAL).

The protein belongs to the PsbB/PsbC family. IsiA/Pcb subfamily. The antenna complex consists of divinyl chlorophylls (a and b) and divinyl chlorophyll a/b binding proteins and binds more divinyl chlorophyll b than does the antenna complex from high-light-adapted Prochlorococcus. The cofactor is divinyl chlorophyll a. Divinyl chlorophyll b is required as a cofactor.

It is found in the cellular thylakoid membrane. In terms of biological role, the antenna complex functions as a light receptor, it captures and delivers excitation energy to photosystems II and I. The Prochlorales pcb genes are not related to higher plant LHCs. The sequence is that of Divinyl chlorophyll a/b light-harvesting protein PcbA (pcbA) from Prochlorococcus marinus (strain NATL2A).